A 962-amino-acid polypeptide reads, in one-letter code: Glycine dehydrogenase (decarboxylating) (962 aa).

The residue at position 709 (Lys-709) is an N6-(pyridoxal phosphate)lysine.

It belongs to the GcvP family. In terms of assembly, the glycine cleavage system is composed of four proteins: P, T, L and H. The cofactor is pyridoxal 5'-phosphate.

It carries out the reaction N(6)-[(R)-lipoyl]-L-lysyl-[glycine-cleavage complex H protein] + glycine + H(+) = N(6)-[(R)-S(8)-aminomethyldihydrolipoyl]-L-lysyl-[glycine-cleavage complex H protein] + CO2. The glycine cleavage system catalyzes the degradation of glycine. The P protein binds the alpha-amino group of glycine through its pyridoxal phosphate cofactor; CO(2) is released and the remaining methylamine moiety is then transferred to the lipoamide cofactor of the H protein. This Shewanella baltica (strain OS223) protein is Glycine dehydrogenase (decarboxylating).